The primary structure comprises 255 residues: Folate receptor alpha (255 aa).

Positions 1 to 24 are cleaved as a signal peptide; the sequence is MAHLMTVQLLLLVMWMAECAQSRA. 8 disulfide bridges follow: Cys-35–Cys-63, Cys-55–Cys-103, Cys-64–Cys-107, Cys-87–Cys-173, Cys-94–Cys-144, Cys-133–Cys-207, Cys-137–Cys-187, and Cys-150–Cys-167. Residue Asn-67 is glycosylated (N-linked (GlcNAc...) asparagine). Residues Asp-101, Tyr-105, 122–126, 155–160, and Ser-194 contribute to the folate site; these read WRKER and HKGWNW. An N-linked (GlcNAc...) asparagine glycan is attached at Asn-159. Asn-199 carries N-linked (GlcNAc...) asparagine glycosylation. A lipid anchor (GPI-anchor amidated serine) is attached at Ser-232. A propeptide spans 233–255 (removed in mature form); sequence GAGFHGTWPLLCSLSLVLLWVIS.

The protein belongs to the folate receptor family. In terms of processing, the secreted form is derived from the membrane-bound form either by cleavage of the GPI anchor, or/and by proteolysis catalyzed by a metalloprotease. Detected in kidney proximal tubules (at protein level).

The protein localises to the cell membrane. It localises to the apical cell membrane. The protein resides in the basolateral cell membrane. It is found in the secreted. Its subcellular location is the cytoplasmic vesicle. The protein localises to the clathrin-coated vesicle. It localises to the endosome. Functionally, binds to folate and reduced folic acid derivatives and mediates delivery of 5-methyltetrahydrofolate and folate analogs into the interior of cells. Has high affinity for folate and folic acid analogs at neutral pH. Exposure to slightly acidic pH after receptor endocytosis triggers a conformation change that strongly reduces its affinity for folates and mediates their release. Required for normal embryonic development and normal cell proliferation. Required for renal folate reabsorption. The polypeptide is Folate receptor alpha (Folr1) (Mus musculus (Mouse)).